The sequence spans 89 residues: Small ribosomal subunit protein uS15 (89 aa).

It belongs to the universal ribosomal protein uS15 family. As to quaternary structure, part of the 30S ribosomal subunit. Forms a bridge to the 50S subunit in the 70S ribosome, contacting the 23S rRNA.

In terms of biological role, one of the primary rRNA binding proteins, it binds directly to 16S rRNA where it helps nucleate assembly of the platform of the 30S subunit by binding and bridging several RNA helices of the 16S rRNA. Functionally, forms an intersubunit bridge (bridge B4) with the 23S rRNA of the 50S subunit in the ribosome. In Cereibacter sphaeroides (strain ATCC 17025 / ATH 2.4.3) (Rhodobacter sphaeroides), this protein is Small ribosomal subunit protein uS15.